The primary structure comprises 312 residues: Fasciclin-like arabinogalactan protein elcF (312 aa).

The N-terminal stretch at 1 to 16 (MKLFTLLLPALTSAHS) is a signal peptide. 2 FAS1 domains span residues 17–160 (LSTL…NASM) and 162–289 (LPHN…DKVL). Residues Asn48, Asn68, Asn113, Asn157, and Asn165 are each glycosylated (N-linked (GlcNAc...) asparagine).

It belongs to the fasciclin-like AGP family.

The protein operates within secondary metabolite biosynthesis. Functionally, fasciclin-like arabinogalactan protein; part of the gene cluster that mediates the biosynthesis of elsinochrome C, a perelyenequinone phytotoxin structurally similar to cercosporin. The first step of elsinochrome C biosynthesis is performed by the polyketide synthase elcA which catalyzes the formation of nor-toralactone. The starter unit acyltransferase (SAT) domain of elcA initiates polyketide extension by the selective utilization of acetyl-CoA, which is elongated to the heptaketide in the beta-ketoacyl synthase (KS) domain by successive condensations with six malonyl units introduced by the malonyl acyltransferase (MAT) domain. The product template (PT) domain catalyzes C4-C9 and C2-C11 aldol cyclizations and dehydrations to a trihydroxynaphthalene, which is thought to be delivered to the thioesterase (TE) domain for product release. The bifunctional enzyme elcB then methylates nor-toralactone to toralactone before conducting an unusual oxidative aromatic ring opening. The next step in perylenequinone biosynthesis is an O-methylation at the nascent OH-6 of the elcB product performed by the O-methyltransferase elcD. The oxidative coupling of the two monomeric naphthol units in perylenequinone biosynthesis is catalyzed by the FAD-dependent monooxygenase elcE and the multicopper oxidase elcG. ElcG might catalyze the first intermolecular coupling in a regio- and stereo-selective manner via a phenol radical coupling mechanism and the elcE could forge the second C-C bond intramolecularly via a hydride transfer mechanism. The fasciclin domain-containing protein elcF might also play a role duting this step. The last piece of the puzzle in the biosynthesis of elsinochrome C is the additional annulation by enolate coupling to afford the dihydrobenzo(ghi)perylenequinone system, catalyzed by the FAD-dependent monooxygenase elcH. In Phaeosphaeria nodorum (strain SN15 / ATCC MYA-4574 / FGSC 10173) (Glume blotch fungus), this protein is Fasciclin-like arabinogalactan protein elcF.